A 74-amino-acid chain; its full sequence is Mu-conotoxin-like T3.1 (74 aa).

Positions 1-19 (MSKLGVLLTICLLLFPLTA) are cleaved as a signal peptide. A propeptide spanning residues 20–74 (LPMDGDEPADRPAERMQDNISSEQHPLFEERHGCCKGPEGCSSRECRPQHCCGRR) is cleaved from the precursor. Disulfide bonds link Cys-53–Cys-65, Cys-54–Cys-70, and Cys-60–Cys-71. The residue at position 57 (Pro-57) is a 4-hydroxyproline. 4-carboxyglutamate occurs at positions 58 and 64. Pro-67 is modified (4-hydroxyproline). Cys-71 is subject to Cysteine amide.

The protein belongs to the conotoxin M superfamily. As to expression, expressed by the venom duct.

The protein localises to the secreted. Its function is as follows. Mu-conotoxins block voltage-gated sodium channels (Nav). In vitro, this synthetic peptide displays a low blocking effect in mouse extensor digitorum longus muscles (IC(50)=616 nM). The protein is Mu-conotoxin-like T3.1 of Conus tulipa (Fish-hunting cone snail).